The primary structure comprises 415 residues: Serine hydroxymethyltransferase (415 aa).

(6S)-5,6,7,8-tetrahydrofolate is bound by residues Leu-117 and Gly-121–Leu-123. Position 226 is an N6-(pyridoxal phosphate)lysine (Lys-226). Ser-349 to Phe-351 lines the (6S)-5,6,7,8-tetrahydrofolate pocket.

It belongs to the SHMT family. As to quaternary structure, homodimer. Pyridoxal 5'-phosphate serves as cofactor.

It is found in the cytoplasm. The enzyme catalyses (6R)-5,10-methylene-5,6,7,8-tetrahydrofolate + glycine + H2O = (6S)-5,6,7,8-tetrahydrofolate + L-serine. It functions in the pathway one-carbon metabolism; tetrahydrofolate interconversion. Its pathway is amino-acid biosynthesis; glycine biosynthesis; glycine from L-serine: step 1/1. Its function is as follows. Catalyzes the reversible interconversion of serine and glycine with tetrahydrofolate (THF) serving as the one-carbon carrier. This reaction serves as the major source of one-carbon groups required for the biosynthesis of purines, thymidylate, methionine, and other important biomolecules. Also exhibits THF-independent aldolase activity toward beta-hydroxyamino acids, producing glycine and aldehydes, via a retro-aldol mechanism. This Geobacter sp. (strain M21) protein is Serine hydroxymethyltransferase.